Consider the following 359-residue polypeptide: Protein Wnt-8a (359 aa).

The N-terminal stretch at M1–S25 is a signal peptide. Residues C55 and C66 are joined by a disulfide bond. N104 carries an N-linked (GlcNAc...) asparagine glycan. 10 disulfide bridges follow: C105–C113, C115–C133, C181–C195, C183–C190, C260–C298, C276–C291, C295–C337, C313–C328, C315–C325, and C320–C321. S187 carries the O-palmitoleoyl serine lipid modification. N263 and N282 each carry an N-linked (GlcNAc...) asparagine glycan. The N-linked (GlcNAc...) asparagine glycan is linked to N348.

This sequence belongs to the Wnt family. In terms of processing, palmitoleoylation is required for efficient binding to frizzled receptors. Depalmitoleoylation leads to Wnt signaling pathway inhibition. Proteolytic processing by tiki1 and tiki2 promotes oxidation and formation of large disulfide-bond oligomers, leading to inactivation of wnt8. As to expression, expressed in the margin of the pregastrula embryo destined to be the future mesoderm.

The protein localises to the secreted. It localises to the extracellular space. The protein resides in the extracellular matrix. Its function is as follows. Ligand for members of the frizzled family of seven transmembrane receptors. Required for mesoderm and neural ectoderm patterning during gastrulation. Involved in axis formation during embryonic development, via activation of canonical Wnt/CTNNB1 signaling. May be involved in the specification of the spatial patterns of expression of Gsc and other regulatory genes leading to the establishment of the embryonic axis. The chain is Protein Wnt-8a (wnt8a) from Danio rerio (Zebrafish).